We begin with the raw amino-acid sequence, 135 residues long: MSDLTSPKVNKSDADWREQLTPEQYHILREHGTERPFTGPYWNSTEKGLYRCAACDEPLFLSDTKFDAGCGWPSYFEPVKPGAVTEHRDSTHGMVRTEIRCANCGGHLGHVFPDGPPPTGLRYCINGHSMVFEPV.

Positions 13–135 (DADWREQLTP…NGHSMVFEPV (123 aa)) constitute a MsrB domain. Cys52, Cys55, Cys101, and Cys104 together coordinate Zn(2+). The active-site Nucleophile is the Cys124.

This sequence belongs to the MsrB Met sulfoxide reductase family. Zn(2+) serves as cofactor.

The enzyme catalyses L-methionyl-[protein] + [thioredoxin]-disulfide + H2O = L-methionyl-(R)-S-oxide-[protein] + [thioredoxin]-dithiol. This chain is Peptide methionine sulfoxide reductase MsrB, found in Agrobacterium fabrum (strain C58 / ATCC 33970) (Agrobacterium tumefaciens (strain C58)).